A 342-amino-acid polypeptide reads, in one-letter code: Transmembrane protein HWLF3 (342 aa).

A disordered region spans residues 21-64 (PCSTSCPPSPAAPTLLRRRSLPQQRRRPSSSPNRRVRGVTTSPC). Residues 36-48 (LRRRSLPQQRRRP) show a composition bias toward basic residues. The chain crosses the membrane as a helical span at residues 119 to 139 (AIFIFQLAFSFGLGSVFWLGF). N-linked (GlcNAc...) asparagine; by host glycosylation is present at Asn-149. Residues 150 to 170 (YSFFLTVLVPIVCMFITYTLG) form a helical membrane-spanning segment. Asn-176 carries N-linked (GlcNAc...) asparagine; by host glycosylation. Helical transmembrane passes span 177-197 (ATVL…FQMC), 202-222 (VLVG…GLAF), 231-251 (WKCI…LALL), 266-286 (AFSI…VIFF), and 296-316 (AVCL…MLSG). A glycan (N-linked (GlcNAc...) asparagine; by host) is linked at Asn-330.

Belongs to the cytomegalovirus US12 family.

The protein resides in the membrane. The polypeptide is Transmembrane protein HWLF3 (US20) (Human cytomegalovirus (strain Towne) (HHV-5)).